The following is a 106-amino-acid chain: Small ribosomal subunit protein uS10 (106 aa).

This sequence belongs to the universal ribosomal protein uS10 family. Part of the 30S ribosomal subunit.

Its function is as follows. Involved in the binding of tRNA to the ribosomes. The protein is Small ribosomal subunit protein uS10 of Mesomycoplasma hyopneumoniae (strain 232) (Mycoplasma hyopneumoniae).